Reading from the N-terminus, the 263-residue chain is NADH dehydrogenase [ubiquinone] iron-sulfur protein 3, mitochondrial (263 aa).

The transit peptide at 1-35 (MVAAVARLWWRGLLGASALTRGAGRPSVLLLPVRR) directs the protein to the mitochondrion.

The protein belongs to the complex I 30 kDa subunit family. In terms of assembly, core subunit of respiratory chain NADH dehydrogenase (Complex I) which is composed of 45 different subunits. Interacts with NDUFAF3. Interacts with RAB5IF. Found in subcomplexes containing subunits NDUFS2, MT-ND1 and NDUFA13.

The protein resides in the mitochondrion inner membrane. It carries out the reaction a ubiquinone + NADH + 5 H(+)(in) = a ubiquinol + NAD(+) + 4 H(+)(out). Functionally, core subunit of the mitochondrial membrane respiratory chain NADH dehydrogenase (Complex I) which catalyzes electron transfer from NADH through the respiratory chain, using ubiquinone as an electron acceptor. Essential for the catalytic activity and assembly of complex I. The protein is NADH dehydrogenase [ubiquinone] iron-sulfur protein 3, mitochondrial (NDUFS3) of Pongo pygmaeus (Bornean orangutan).